Reading from the N-terminus, the 1365-residue chain is Killer toxin-resistance protein 5 (1365 aa).

The first 17 residues, 1 to 17, serve as a signal peptide directing secretion; the sequence is MRLLALVLLLLCAPLRA. Asn-115, Asn-228, Asn-293, Asn-457, Asn-519, Asn-523, Asn-644, Asn-870, Asn-1091, Asn-1150, and Asn-1195 each carry an N-linked (GlcNAc...) asparagine glycan. Positions 1334-1365 are disordered; that stretch reads FASSPGDEDVPGESVSSKYQDSDNAAPLHDEL. Over residues 1347 to 1356 the composition is skewed to polar residues; that stretch reads SVSSKYQDSD. Positions 1362–1365 match the Prevents secretion from ER motif; the sequence is HDEL.

It to D.melanogaster UGGG.

The protein localises to the endoplasmic reticulum lumen. In terms of biological role, required for (1-&gt;6)-beta-D-glucan synthesis and normal cell growth. In Saccharomyces cerevisiae (strain ATCC 204508 / S288c) (Baker's yeast), this protein is Killer toxin-resistance protein 5 (KRE5).